The chain runs to 761 residues: NADP-dependent malic enzyme (761 aa).

Residues 1-437 are malic enzyme; sequence MPGIDKTDRA…QLSARRDPIA (437 aa). Tyr-49 serves as the catalytic Proton donor. The active-site Proton acceptor is the Lys-104. 3 residues coordinate a divalent metal cation: Glu-146, Asp-147, and Asp-172. NADP(+) contacts are provided by residues 205-208, Asn-297, and Asn-329; that span reads AGAA. A phosphate acetyltransferase region spans residues 438 to 761; the sequence is STLQRIVERV…AAIAAYNAGT (324 aa).

In the N-terminal section; belongs to the malic enzymes family. This sequence in the C-terminal section; belongs to the phosphate acetyltransferase and butyryltransferase family. Homooctamer. The cofactor is Mg(2+). Requires Mn(2+) as cofactor.

It catalyses the reaction (S)-malate + NADP(+) = pyruvate + CO2 + NADPH. It carries out the reaction oxaloacetate + H(+) = pyruvate + CO2. The chain is NADP-dependent malic enzyme (tme) from Rhizobium meliloti (strain 1021) (Ensifer meliloti).